The following is a 321-amino-acid chain: Putative membrane-bound redox modulator Alx (321 aa).

Topologically, residues 1 to 6 are periplasmic; that stretch reads MNTVGT. A helical transmembrane segment spans residues 7–27; that stretch reads PLLWGGFAVVVAIMLAIDLLL. The Cytoplasmic portion of the chain corresponds to 28–43; it reads QGRRGAHAMTMKQAAA. Residues 44–64 form a helical membrane-spanning segment; it reads WSLVWVTLSLLFNAAFWWYLV. Residues 65–89 lie on the Periplasmic side of the membrane; it reads QTEGRAVADPQALAFLTGYLIEKSL. The chain crosses the membrane as a helical span at residues 90–110; sequence AVDNVFVWLMLFSYFSVPAAL. The Cytoplasmic portion of the chain corresponds to 111 to 113; sequence QRR. A helical transmembrane segment spans residues 114–134; the sequence is VLVYGVLGAIVLRTIMIFTGS. Tryptophan 135 is a topological domain (periplasmic). The chain crosses the membrane as a helical span at residues 136 to 156; it reads LISQFDWILYIFGAFLLFTGV. At 157-198 the chain is on the cytoplasmic side; the sequence is KMALAHEDESGIGDKPLVRWLRGHLRMTDTIDNEHFFVRKNG. The helical transmembrane segment at 199–219 threads the bilayer; sequence LLYATPLMLVLILVELSDVIF. Topologically, residues 220–225 are periplasmic; sequence AVDSIP. Residues 226–246 traverse the membrane as a helical segment; it reads AIFAVTTDPFIVLTSNLFAIL. At 247-261 the chain is on the cytoplasmic side; sequence GLRAMYFLLAGVAER. Residues 262–282 traverse the membrane as a helical segment; that stretch reads FSMLKYGLAVILVFIGIKMLI. The Periplasmic segment spans residues 283–286; sequence VDFY. Residues 287–307 traverse the membrane as a helical segment; the sequence is HIPIAVSLGVVFGILVMTFII. Topologically, residues 308–321 are cytoplasmic; sequence NAWVNYRHDKQRVG.

It belongs to the TerC family.

It localises to the cell inner membrane. Has been proposed to be a redox modulator. This Escherichia coli O157:H7 protein is Putative membrane-bound redox modulator Alx (alx).